Reading from the N-terminus, the 345-residue chain is Alpha-2-HS-glycoprotein (345 aa).

Residues 1 to 18 (MKSLVLLLCFAQLWGCQS) form the signal peptide. In terms of domain architecture, Cystatin fetuin-A-type 1 spans 19–133 (APQGTGLGFR…QFRVMHTQCH (115 aa)). 6 cysteine pairs are disulfide-bonded: C32-C336, C89-C100, C114-C132, C146-C149, C208-C219, and C230-C247. N99 carries an N-linked (GlcNAc...) asparagine glycan. S134 is modified (phosphoserine). Residue T135 is modified to Phosphothreonine. S138 carries the post-translational modification Phosphoserine. A Cystatin fetuin-A-type 2 domain is found at 144-250 (KLCPRCPLLT…EEVSVACKLF (107 aa)). N-linked (GlcNAc...) asparagine glycosylation is found at N156 and N176. Residues S305, S309, S312, and S314 each carry the phosphoserine modification. Residues 312 to 334 (SASGETLHSPKVGQPGAAGPVSP) form a disordered region.

Belongs to the fetuin family. Phosphorylated by FAM20C in the extracellular medium. In terms of tissue distribution, liver is the major site of synthesis, but fetuin is also expressed in limb buds and other extrahepatic tissues during development.

Its subcellular location is the secreted. Probably involved in differentiation. In terms of biological role, (Microbial infection) Facilitates invasion of hepatocytes by Plasmodium berghei sporozoites. This Mus musculus (Mouse) protein is Alpha-2-HS-glycoprotein (Ahsg).